Consider the following 355-residue polypeptide: Cobalt-precorrin-5B C(1)-methyltransferase (355 aa).

It belongs to the CbiD family.

It carries out the reaction Co-precorrin-5B + S-adenosyl-L-methionine = Co-precorrin-6A + S-adenosyl-L-homocysteine. It functions in the pathway cofactor biosynthesis; adenosylcobalamin biosynthesis; cob(II)yrinate a,c-diamide from sirohydrochlorin (anaerobic route): step 6/10. In terms of biological role, catalyzes the methylation of C-1 in cobalt-precorrin-5B to form cobalt-precorrin-6A. The sequence is that of Cobalt-precorrin-5B C(1)-methyltransferase from Sulfolobus acidocaldarius (strain ATCC 33909 / DSM 639 / JCM 8929 / NBRC 15157 / NCIMB 11770).